Here is a 396-residue protein sequence, read N- to C-terminus: Probable peptidoglycan glycosyltransferase FtsW (396 aa).

Topologically, residues 1–27 are cytoplasmic; that stretch reads MPFLDKVKQQYEDWTRITPSNLLYDRA. A helical membrane pass occupies residues 28-48; it reads LLLLFFVLLLIGLLAVSSASI. The Periplasmic portion of the chain corresponds to 49 to 64; sequence PVGTRLFKDPFYFAKR. Residues 65–85 traverse the membrane as a helical segment; sequence DAIYVFLSCVTCYLCVQVPME. The Cytoplasmic portion of the chain corresponds to 86–93; that stretch reads KWEQWHVR. Residues 94-114 form a helical membrane-spanning segment; it reads LFAFAIFLLILVLIPGIGLSV. Topologically, residues 115–122 are periplasmic; it reads NGARRWIP. Residues 123–143 form a helical membrane-spanning segment; sequence MVLFNFQPAEFAKLALTCFLA. The Cytoplasmic portion of the chain corresponds to 144–157; that stretch reads SYFTRKYDEVRSRK. The helical transmembrane segment at 158-178 threads the bilayer; sequence LSAFKPFALMGLMGLFLLSQP. Residues 179–183 lie on the Periplasmic side of the membrane; the sequence is DLGST. 2 helical membrane-spanning segments follow: residues 184 to 204 and 205 to 225; these read VVLFVITFGLLFIVGANFWQF and VGLMAFGGLLFVWLVLSSAYR. At 226–285 the chain is on the periplasmic side; it reads LKRFTGFLDPFKDPYGTGFQLSNSLMAFGRGEWVGEGLGNSIQKLEYLPEAHTDFVMAVV. Residues 286-306 traverse the membrane as a helical segment; sequence GEEFGFLGILVIVILLGLLIF. At 307–323 the chain is on the cytoplasmic side; it reads RAMKIGRESLLLEQRFK. The helical transmembrane segment at 324–344 threads the bilayer; that stretch reads GFFAFGISFWIFFQGFVNLGM. The Periplasmic portion of the chain corresponds to 345 to 355; the sequence is SLGLLPTKGLT. A helical transmembrane segment spans residues 356-376; the sequence is FPLISYGGSSLIIMSMTIGLL. The Cytoplasmic segment spans residues 377–396; the sequence is LRIDHENRLMRIGQARLRDD.

This sequence belongs to the SEDS family. FtsW subfamily.

Its subcellular location is the cell inner membrane. The catalysed reaction is [GlcNAc-(1-&gt;4)-Mur2Ac(oyl-L-Ala-gamma-D-Glu-L-Lys-D-Ala-D-Ala)](n)-di-trans,octa-cis-undecaprenyl diphosphate + beta-D-GlcNAc-(1-&gt;4)-Mur2Ac(oyl-L-Ala-gamma-D-Glu-L-Lys-D-Ala-D-Ala)-di-trans,octa-cis-undecaprenyl diphosphate = [GlcNAc-(1-&gt;4)-Mur2Ac(oyl-L-Ala-gamma-D-Glu-L-Lys-D-Ala-D-Ala)](n+1)-di-trans,octa-cis-undecaprenyl diphosphate + di-trans,octa-cis-undecaprenyl diphosphate + H(+). It participates in cell wall biogenesis; peptidoglycan biosynthesis. In terms of biological role, peptidoglycan polymerase that is essential for cell division. The polypeptide is Probable peptidoglycan glycosyltransferase FtsW (Pasteurella multocida (strain Pm70)).